Here is a 348-residue protein sequence, read N- to C-terminus: Dihydroorotate dehydrogenase (quinone) (348 aa).

Residues 60-64 and T84 contribute to the FMN site; that span reads AGLDK. K64 serves as a coordination point for substrate. A substrate-binding site is contributed by 109–113; it reads NRMGF. N137 and N170 together coordinate FMN. N170 is a binding site for substrate. The active-site Nucleophile is S173. N175 serves as a coordination point for substrate. FMN contacts are provided by K215 and T243. 244 to 245 contacts substrate; the sequence is NT. FMN-binding positions include G266, G295, and 316 to 317; that span reads YS.

This sequence belongs to the dihydroorotate dehydrogenase family. Type 2 subfamily. Monomer. It depends on FMN as a cofactor.

The protein resides in the cell membrane. The enzyme catalyses (S)-dihydroorotate + a quinone = orotate + a quinol. The protein operates within pyrimidine metabolism; UMP biosynthesis via de novo pathway; orotate from (S)-dihydroorotate (quinone route): step 1/1. Its function is as follows. Catalyzes the conversion of dihydroorotate to orotate with quinone as electron acceptor. The polypeptide is Dihydroorotate dehydrogenase (quinone) (Nitrosospira multiformis (strain ATCC 25196 / NCIMB 11849 / C 71)).